The following is a 574-amino-acid chain: Septation ring formation regulator EzrA (574 aa).

The Extracellular segment spans residues 1–7 (MSIGLVI). A helical transmembrane segment spans residues 8 to 26 (LVAVVALLLVVGYGTAVLM). Coiled coils occupy residues 26-47 (MRKR…LYNL), 105-189 (KAKH…QFVT), 258-346 (ESRF…FLIS), 375-415 (SETK…IEKD), and 455-494 (STSN…LEEE). Over 27-574 (RKRNEALLQN…YEKTRENIRF (548 aa)) the chain is Cytoplasmic.

The protein belongs to the EzrA family.

It localises to the cell membrane. Functionally, negative regulator of FtsZ ring formation; modulates the frequency and position of FtsZ ring formation. Inhibits FtsZ ring formation at polar sites. Interacts either with FtsZ or with one of its binding partners to promote depolymerization. The protein is Septation ring formation regulator EzrA of Streptococcus sanguinis (strain SK36).